We begin with the raw amino-acid sequence, 520 residues long: Erythritol kinase (520 aa).

Belongs to the FGGY kinase family.

The catalysed reaction is erythritol + ATP = D-erythritol 1-phosphate + ADP + H(+). It functions in the pathway carbohydrate metabolism; erythritol degradation. Functionally, catalyzes the phosphorylation of erythritol to D-erythritol-1-phosphate. In Brucella abortus (strain 2308), this protein is Erythritol kinase.